The sequence spans 724 residues: NAD(+) hydrolase SARM1 (724 aa).

The N-terminal 27 residues, 1 to 27 (MVLTLLLSAYKLCRFFAMSGPRPGAER), are a transit peptide targeting the mitochondrion. The ARM 1 repeat unit spans residues 60–100 (EVQDALERALPELQQALSALKQAGGARAVGAGLAEVFQLVE). Residues Trp-103, Arg-110, 149 to 157 (EQILVAENR), and 190 to 193 (HMFK) contribute to the NAD(+) site. ARM repeat units lie at residues 114–153 (QGLCDAIRLDGGLDLLLRLLQAPELETRVQAARLLEQILV), 155–193 (ENRDRVARIGLGVILNLAKEREPVELARSVAGILEHMFK), 196–235 (EETCQRLVAAGGLDAVLYWCRRTDPALLRHCALALGNCAL), 237–280 (GGQA…LATN), 281–314 (KEVEREVERSGTLALVEPLVASLDPGRFARCLVD), 315–354 (ASDTSQGRGPDDLQRLVPLLDSNRLEAQCIGAFYLCAEAA), and 359–402 (QGKT…EEVP). 2 consecutive SAM domains span residues 412 to 476 (WKEA…LKTF) and 486 to 548 (NLAD…MLHS). Residues Ser-548 and Ser-558 each carry the phosphoserine modification. Positions 560–703 (DTPDVFISYR…KIIRFLQGRS (144 aa)) constitute a TIR domain. Residues 569–570 (RR) and Glu-599 each bind NAD(+). Glu-642 is a catalytic residue. A disordered region spans residues 704 to 724 (SRDSSAGSDTSLEGAAPMGPT).

It belongs to the SARM1 family. As to quaternary structure, homooctamer; forms an octameric ring via SAM domains. Interacts with TICAM1/TRIF and thereby interferes with TICAM1/TRIF function. Interacts with MAPK10/JNK3 and SDC2 (via cytoplasmic domain). Phosphorylation at Ser-548 by JNK kinases (MAPK8, MAPK9 and /or MAPK10) enhance the NAD(+) hydrolase (NADase) activity. Phosphorylation at Ser-548 and subsequent activation takes place in response to oxidative stress conditions and inhibits mitochondrial respiration. As to expression, predominantly expressed in brain, kidney and liver. Expressed at lower level in placenta.

The protein localises to the cytoplasm. It localises to the cell projection. The protein resides in the axon. Its subcellular location is the dendrite. It is found in the synapse. The protein localises to the mitochondrion. It catalyses the reaction NAD(+) + H2O = ADP-D-ribose + nicotinamide + H(+). It carries out the reaction NAD(+) = cyclic ADP-beta-D-ribose + nicotinamide + H(+). The catalysed reaction is NADP(+) + H2O = ADP-D-ribose 2'-phosphate + nicotinamide + H(+). Its activity is regulated as follows. Autoinhibited: in the inactive state, the enzymatic TIR domain is held apart by the autoinhibiting ARM repeats. NAD(+)-binding to ARM repeats maintains an inactive state by promoting interaction between ARM repeats and the TIR domain, thereby facilitating inhibition of the enzymatic TIR domain. Following activation, possibly by nicotinamide mononucleotide (NMN), auto-inhibitory interactions are released, allowing self-association of the TIR domains and subsequent activation of the NAD(+) hydrolase (NADase) activity. Self-association of TIR domains is facilitated by the octamer of SAM domains. NAD(+) hydrolase activity is inhibited by nicotinamide. Specifically inhibited by berberine chloride and zinc chloride. In terms of biological role, NAD(+) hydrolase, which plays a key role in axonal degeneration following injury by regulating NAD(+) metabolism. Acts as a negative regulator of MYD88- and TRIF-dependent toll-like receptor signaling pathway by promoting Wallerian degeneration, an injury-induced form of programmed subcellular death which involves degeneration of an axon distal to the injury site. Wallerian degeneration is triggered by NAD(+) depletion: in response to injury, SARM1 is activated and catalyzes cleavage of NAD(+) into ADP-D-ribose (ADPR), cyclic ADPR (cADPR) and nicotinamide; NAD(+) cleavage promoting cytoskeletal degradation and axon destruction. Also able to hydrolyze NADP(+), but not other NAD(+)-related molecules. Can activate neuronal cell death in response to stress. Regulates dendritic arborization through the MAPK4-JNK pathway. Involved in innate immune response: inhibits both TICAM1/TRIF- and MYD88-dependent activation of JUN/AP-1, TRIF-dependent activation of NF-kappa-B and IRF3, and the phosphorylation of MAPK14/p38. In Homo sapiens (Human), this protein is NAD(+) hydrolase SARM1.